The following is a 462-amino-acid chain: ATP synthase subunit beta (462 aa).

151–158 (GGAGVGKT) lines the ATP pocket.

It belongs to the ATPase alpha/beta chains family. In terms of assembly, F-type ATPases have 2 components, CF(1) - the catalytic core - and CF(0) - the membrane proton channel. CF(1) has five subunits: alpha(3), beta(3), gamma(1), delta(1), epsilon(1). CF(0) has four main subunits: a(1), b(1), b'(1) and c(9-12).

The protein localises to the cell inner membrane. It carries out the reaction ATP + H2O + 4 H(+)(in) = ADP + phosphate + 5 H(+)(out). Functionally, produces ATP from ADP in the presence of a proton gradient across the membrane. The catalytic sites are hosted primarily by the beta subunits. This chain is ATP synthase subunit beta, found in Chlorobium phaeovibrioides (strain DSM 265 / 1930) (Prosthecochloris vibrioformis (strain DSM 265)).